Here is a 504-residue protein sequence, read N- to C-terminus: Acetyltransferase pyiB (504 aa).

Residues 1-18 (MGFLSAGGLWASLFRARI) form the signal peptide. Asparagine 84 carries N-linked (GlcNAc...) asparagine glycosylation. Catalysis depends on histidine 181, which acts as the Proton acceptor. Asparagine 413 and asparagine 467 each carry an N-linked (GlcNAc...) asparagine glycan.

Belongs to the plant acyltransferase family.

The protein operates within mycotoxin biosynthesis. Functionally, acetyltransferase; part of the gene cluster that mediates the biosynthesis of the mycotoxin pyrichalasin H, a tyrosine-derived cytochalasan that inhibits the growth of rice seedlings, but also inhibits lymphocyte capping and actin polymerization and alters cell morphology. Pyrichalasin H is indicated as the responsible agent for the genus-specific pathogenicity of M.grisea toward crabgrass. The first step in the pathway is catalyzed by the O-methyltransferase pyiA which methylates free tyrosine to generate the precursor O-methyltyrosine. The hybrid PKS-NRPS pyiS, assisted by the enoyl reductase pyiC, are responsible for fusion of the O-methyltyrosine precursor and the polyketide backbone. The polyketide synthase module (PKS) of pyiS is responsible for the synthesis of the polyketide backbone and the downstream nonribosomal peptide synthetase (NRPS) amidates the carboxyl end of the polyketide with the O-methyltyrosine precursor. As the NRPS A-domain demonstrates substrate tolerance, pyiS can also use phenylalanine, tyrosine and even para-chlorophenylalanine as amino acid precursor, which leads to the production of novel cytochalasans, including halogenated cytochalasans. Because pyiS lacks a designated enoylreductase (ER) domain, the required activity is provided the enoyl reductase pyiC. Reduction by the hydrolyase pyiE leads to 1,5-dihydropyrrolone, which is substrate for dehydration and intra-molecular Diels-Alder cyclization by the Diels-Alderase pyiF to yield the required isoindolone-fused macrocycle. The tailoring cytochrome P450 monooxygenases piyD and piyG catalyze the hydroxylation at C-18 and C-7, respectivily, whereas the short-chain dehydrogenase/reductase pyiH reduces the carbonyl at C-21 in preparation for the transfer of an acetyl group by the acetyltransferase pyiB. These 3 reactions whose order is not clear yet, lead to the production of O-methylpyrichalasin J, a deacetylated pyrichalasin H. Finally, pyiB to converts O-methylpyrichalasin J into the final product pyrichalasin H via acetylation of C-21. The sequence is that of Acetyltransferase pyiB from Pyricularia grisea (Crabgrass-specific blast fungus).